Here is a 177-residue protein sequence, read N- to C-terminus: NADH-quinone oxidoreductase subunit B (177 aa).

[4Fe-4S] cluster-binding residues include Cys56, Cys57, Cys121, and Cys151.

This sequence belongs to the complex I 20 kDa subunit family. In terms of assembly, NDH-1 is composed of 14 different subunits. Subunits NuoB, C, D, E, F, and G constitute the peripheral sector of the complex. The cofactor is [4Fe-4S] cluster.

The protein localises to the cell inner membrane. It carries out the reaction a quinone + NADH + 5 H(+)(in) = a quinol + NAD(+) + 4 H(+)(out). Functionally, NDH-1 shuttles electrons from NADH, via FMN and iron-sulfur (Fe-S) centers, to quinones in the respiratory chain. The immediate electron acceptor for the enzyme in this species is believed to be ubiquinone. Couples the redox reaction to proton translocation (for every two electrons transferred, four hydrogen ions are translocated across the cytoplasmic membrane), and thus conserves the redox energy in a proton gradient. This chain is NADH-quinone oxidoreductase subunit B, found in Rhodobacter capsulatus (Rhodopseudomonas capsulata).